Here is a 178-residue protein sequence, read N- to C-terminus: MSRVGKKIIEIPSDVTVDIKGNVITVKGPKGELTRTFDDSMSYKLEDNTLEVVRPSDSQKDRTVHGTTRALINNMVQGVSKGFEKTLELIGVGYRAQLQGSNLVLNVGYSHPVEFKPEDGITFTVEKNTTVKVEGISKELVGATASNIRAVRPPEPYKGKGIRYQGEYVRRKEGKTGK.

This sequence belongs to the universal ribosomal protein uL6 family. In terms of assembly, part of the 50S ribosomal subunit.

In terms of biological role, this protein binds to the 23S rRNA, and is important in its secondary structure. It is located near the subunit interface in the base of the L7/L12 stalk, and near the tRNA binding site of the peptidyltransferase center. The sequence is that of Large ribosomal subunit protein uL6 from Staphylococcus carnosus (strain TM300).